The following is a 649-amino-acid chain: Echinoderm microtubule-associated protein-like 2 (649 aa).

The tandem atypical propeller in EMLs stretch occupies residues 10 to 649 (KEVIFSMEEG…DTSVLQWRVA (640 aa)). 12 WD repeats span residues 56-93 (KLDWVYGYRGRDCRANLYLLPTGEVVYFVASVAVLYSV), 97-144 (RQRH…VWDS), 151-192 (HVLG…VWDW), 195-234 (ESKVVDSKCSNEAVLVATFHPTDPSLLITCGKSHIYFWSL), 241-280 (KRQGLFEKHEKPKYVLCVTFLEGGDVVTGDSGGNLYVWGK), 285-323 (ITQEVQGAHDGGVFALCALRDGTLVSGGGRDRRVVLWGS), 369-406 (FSLLVQGHVEELWGLATHPSRAQFVTCGQDKLVHLWSS), 410-447 (QPVWSRSIEDPARSAGFHPSGSVLAVGTVTGRWLLLDT), 452-489 (LVAIHTDGNEQISVVSFSPDGAYLAVGSHDNLVYVYTV), 495-535 (KVSR…YWDP), 564-602 (FGIWPEGADGTDINAVARSHDGKLLVSADDFGKVHLFSY), and 609-648 (ALSHKYGGHSSHVTNVAFLWDDSMALTTGGKDTSVLQWRV). Positions 65–106 (GRDCRANLYLLPTGEVVYFVASVAVLYSVEEQRQRHYLGHND) form a coiled coil.

This sequence belongs to the WD repeat EMAP family. In terms of assembly, interacts with GRID2 and may also interact with GRID1. Interacts with EML3. Binds unpolymerized tubulins via its WD repeat region.

The protein resides in the cytoplasm. It is found in the cytoskeleton. Its subcellular location is the spindle. Functionally, tubulin binding protein that inhibits microtubule nucleation and growth, resulting in shorter microtubules. This Mus musculus (Mouse) protein is Echinoderm microtubule-associated protein-like 2 (Eml2).